The primary structure comprises 833 residues: Leucine--tRNA ligase (833 aa).

The 'HIGH' region motif lies at 41–52; sequence PYPSGAGLHVGH. Residues 610–614 carry the 'KMSKS' region motif; that stretch reads KMSKS. Residue Lys-613 participates in ATP binding.

This sequence belongs to the class-I aminoacyl-tRNA synthetase family.

Its subcellular location is the cytoplasm. It carries out the reaction tRNA(Leu) + L-leucine + ATP = L-leucyl-tRNA(Leu) + AMP + diphosphate. This is Leucine--tRNA ligase from Streptococcus equi subsp. equi (strain 4047).